We begin with the raw amino-acid sequence, 2068 residues long: MMAQKKKRRKKDIDFLGLYEEELLNYDSEDGEDELEHEYYKAKVYEVVTATGDVRGAGTDANVFITLFGENGLSPKLHLTSKSESAFEKANVDVFRVRTNNVGLIYKIRIEHDNTGLNASWYLDRVIVTDMKRPHLRYYFNCNNWLSKVEGDRQWCRDLLASFDPMDMPRGNKYEIKVYTGDVIGAGTDADVFINIFGEYGDTGERRLENEKDNFEKGAEDKFTLDAPDLGQLMKINVGHNNKGGSAGWFLSKIIIEDIGNKRKYDFPLNRWLALDEDDGKIQRDILVGGAETTAITYIVTVFTGDIRGAGTKSKIYLVMYGARGNKNSGKIFLEGGVFDRGRTDIFHIDLAVLLSPLSRVSIGHGNIGVNRGWYCEKVVILCPFTGIQQTFPCSNWLDEKKADGLIERQLYEMVSLRKKRLKKYPWSLWVWTTDLKKAGTNSPIFIQIYGKKGRTDEILLNPNNKWFKPGIIEKFRMELPDLGRFYKIRAWHDRQNPGSGWHLEKMTLMNTINKDKYNFNCNRWLDANEDDNEIVREMTAEGPTVRRIMGMARYRVTVCTGELEGAGTDANVYLCLFGDVGDTGERLLYNCRNNTDLFEKGNADEFTIESVTMRKVRRVRVRHDGKGSGSGWYLDRVLVREEGQPESDNVEFPCLRWLDKDKDDGQLVRELLPSDSNATLKNFRYHISVKTGDVSGASTDSRVYIKLYGEKSDTIKQVLLVSDNNLKDYFERGRVDEFTLETLNIGTINRLVIGHDSTGMHAGWFLGSVQIRVPRQGKQYTFPANRWLDKNQADGRLEVELYPSEVVEIQKLVHYEIEIWTGDVGGAGTTSRVFVQIYGEEGKTEVLFLSSRSKVFDRGSKDIFQTDTFTIYAIDLGALTKIRIRHDNTGNRPGWFLDRVDITDVNNETTYYFPCQRWLAVEEDDGQLSRELLPVDESYVLPSEDEEGGGQGDNNPLDNLALEQKDKSTTFSVTIKTGDKKNAGTDANVFITLFGTQDNNGMTLLKSSKTNSDKFERDSIEIFTVETLDLGDLWKVRIGHDNTGKAPGWFVDWVEVDAPSLGKCMTFPCGRWLAKNEDDGSIVRDLFHAELQTRLYTPFVPYEITLYTSDVFAAGTDANIFIVIYGCDAVCTRQKFLCTNKREQKLFFERKSASRFIVELEDVGEIIEKIRIGHDNTGINPGWHCSHVDIRRLLPEKDGTETLTFPCDRWLATSEDDKKTIRELVPYDIFTEKYMKDGSLRQVYKEVEEPLDIVLYSVQIFTGNVPGAGTDAKVYITIYGDLGDTGERYLGKSENRTNKFEKGTADTFIIEAADLGVIYKIKLRHDNTKWCADWYVEKVEIWNDTNEDEFLFLCGRWLSLKKEDGRLERLFYEKEYTGDRSSNCSSPADFWEIALSSKMADVDIDTVTGPMVDYVQDGPVIPYYVSVTTGKHKEAATDSRAFVLLIGEDDECTNRIWLDYPQGKRGFSCGSVEEFYVGGLDVGIIKKIELGHDGASPESCWLVEELCLAVPTQGTKYTLRCNCWLAKDRGDGVTSRVFDLLDAMVVNIGKKVLYEMTVWTGDVVGGGTDSNIFMTLYGINGSTEEVQLDKKKARFEREQNDTFIMEILDIAPFTKMRIRIDGMGSRPEWFLERILLKNMNTGDLTMFYYGDWLSQKKGKKTLVCEICAVIDGEEMMEWTSYTVSVKTSDILGAGTDANVFIIIFGENGDSGTLALKQSANWNKFERNNTDTFNFSDMLSLGHLCKLRVWHDNKGIFPGWHLSYVDVKDNSRDETFRFQCDCWLSKSEGDRQTLRDFACANNEIRDELEETTYEIVIETGNGGETRENVWLILEGRKNRSKEFLVENSSRQRAFRKGTTDTFEFDSIFLGDIASLCVGHLAREDRFIPKRELVWHVKTITITEMEYGNVYFFNCDCLIPLKRKRKYFKVFEVTKTTESFASKIQSLVPVKYEVIVTTGYEPGAGTDANVFVTIFGANGDTGKRELKQKMRNLFERGSTDRFFLETLELGELRKVRLEHDSSGYYSGWLVEKVEVTNTSTGVATIFSCGRWLDKSRGDGLTWRELFPSV.

PLAT domains are found at residues 43–160 (KVYE…RDLL), 172–287 (NKYE…RDIL), 296–412 (ITYI…RQLY), 425–540 (YPWS…REMT), 553–673 (ARYR…RELL), 684–803 (FRYH…VELY), 814–934 (VHYE…RELL), 970–1088 (TTFS…RDLF), 1101–1226 (VPYE…RELV), 1255–1373 (VLYS…RLFY), 1422–1540 (IPYY…RVFD), 1553–1668 (VLYE…CEIC), 1680–1798 (TSYT…RDFA), 1811–1932 (TTYE…VFEV), and 1949–2065 (VKYE…RELF).

As to expression, expressed in the inner ear, specifically in hair cells. Higher expression is detected in the cochlea.

The protein resides in the cell projection. The protein localises to the stereocilium. Its function is as follows. Required for normal function of hair cells in the inner ear. This is Lipoxygenase homology domain-containing protein 1 (Loxhd1) from Mus musculus (Mouse).